The chain runs to 729 residues: Fatty acid oxidation complex subunit alpha (729 aa).

The tract at residues 1-189 is enoyl-CoA hydratase/isomerase; that stretch reads MLYKGDTLYL…KIGLVDGVVK (189 aa). Asp296 contributes to the substrate binding site. Positions 311–729 are 3-hydroxyacyl-CoA dehydrogenase; sequence ETPKQAAVLG…ARPVGDLKTA (419 aa). Residues Met324, Asp343, 400 to 402, Lys407, and Ser429 contribute to the NAD(+) site; that span reads VVE. His450 functions as the For 3-hydroxyacyl-CoA dehydrogenase activity in the catalytic mechanism. NAD(+) is bound at residue Asn453. Substrate-binding residues include Asn500 and Tyr660. A disordered region spans residues 708–729; sequence RHNEPYYPPVEPARPVGDLKTA.

In the N-terminal section; belongs to the enoyl-CoA hydratase/isomerase family. It in the C-terminal section; belongs to the 3-hydroxyacyl-CoA dehydrogenase family. As to quaternary structure, heterotetramer of two alpha chains (FadB) and two beta chains (FadA).

It catalyses the reaction a (3S)-3-hydroxyacyl-CoA + NAD(+) = a 3-oxoacyl-CoA + NADH + H(+). The catalysed reaction is a (3S)-3-hydroxyacyl-CoA = a (2E)-enoyl-CoA + H2O. It carries out the reaction a 4-saturated-(3S)-3-hydroxyacyl-CoA = a (3E)-enoyl-CoA + H2O. The enzyme catalyses (3S)-3-hydroxybutanoyl-CoA = (3R)-3-hydroxybutanoyl-CoA. It catalyses the reaction a (3Z)-enoyl-CoA = a 4-saturated (2E)-enoyl-CoA. The catalysed reaction is a (3E)-enoyl-CoA = a 4-saturated (2E)-enoyl-CoA. It participates in lipid metabolism; fatty acid beta-oxidation. Involved in the aerobic and anaerobic degradation of long-chain fatty acids via beta-oxidation cycle. Catalyzes the formation of 3-oxoacyl-CoA from enoyl-CoA via L-3-hydroxyacyl-CoA. It can also use D-3-hydroxyacyl-CoA and cis-3-enoyl-CoA as substrate. The protein is Fatty acid oxidation complex subunit alpha of Escherichia coli O17:K52:H18 (strain UMN026 / ExPEC).